Reading from the N-terminus, the 149-residue chain is Large ribosomal subunit protein bL9 (149 aa).

This sequence belongs to the bacterial ribosomal protein bL9 family.

In terms of biological role, binds to the 23S rRNA. This chain is Large ribosomal subunit protein bL9, found in Aquifex aeolicus (strain VF5).